Here is a 486-residue protein sequence, read N- to C-terminus: Lipase 1 (486 aa).

C58 and C82 are oxidised to a cystine. The active-site Acyl-ester intermediate is the S193. The active-site Charge relay system is D303. N332 carries an N-linked (GlcNAc...) asparagine glycan. H392 functions as the Charge relay system in the catalytic mechanism.

This sequence belongs to the type-B carboxylesterase/lipase family.

The catalysed reaction is a triacylglycerol + H2O = a diacylglycerol + a fatty acid + H(+). The polypeptide is Lipase 1 (LIP1) (Yarrowia lipolytica (strain CLIB 122 / E 150) (Yeast)).